Reading from the N-terminus, the 5121-residue chain is Hydrocephalus-inducing protein homolog (5121 aa).

Positions 363–754 are interaction with KIF9; sequence EFFEECITDP…VLFSSPTPSG (392 aa). Positions 956–967 are enriched in basic residues; that stretch reads LSKKGRVKKGHA. Disordered regions lie at residues 956 to 987, 1925 to 1951, 2155 to 2186, 2333 to 2459, 2482 to 2534, 2664 to 2684, and 3852 to 3874; these read LSKK…SPVF, LAQE…TSLS, SKAD…LPPG, EQER…KFKT, LPPA…AERE, TNTT…KQKM, and KPDH…TGST. A coiled-coil region spans residues 1908-1933; the sequence is EIKKSKEEQMRAKYLENLAQENEEED. Residues 1936 to 1951 show a composition bias toward polar residues; it reads SSDQGTSNSTKRTSLS. Residues 2267 to 2365 are a coiled coil; it reads AQDYAAMKAQ…EDELKRRVKK (99 aa). Basic and acidic residues-rich tracts occupy residues 2333 to 2360, 2393 to 2418, 2444 to 2453, 2489 to 2498, and 2509 to 2534; these read EQER…DELK, VDVK…EELN, DNSKDPDKQL, EAPHEPDDQR, and KDRE…AERE. The stretch at 2504–2549 forms a coiled coil; sequence GRRGRKDRERERLEKERTEKERLEREKAERERLEKLRALEERSDWE. Composition is skewed to polar residues over residues 2664–2679 and 3857–3874; these read TNTT…SSKG and GSAQ…TGST.

Interacts with KIF9.

The protein localises to the cell projection. Its subcellular location is the cilium. It localises to the cytoplasm. It is found in the cytoskeleton. The protein resides in the cilium axoneme. The protein localises to the flagellum. Required for ciliary motility. This chain is Hydrocephalus-inducing protein homolog (HYDIN), found in Homo sapiens (Human).